Here is a 203-residue protein sequence, read N- to C-terminus: MKNDSMKSQYRINEQIRAKEVRIVGDDVEPKVYPIFQALKLAEEKELDLVEISPNAQPPVCRIIDYSKFLYQLKKRQKEQKAKQVKVNVKEIRFGPQTDDHDYNFKLKHAKGFLEDGDKVKAYVFFKGRSILFKEQGEVLLLRFANDLEDYAKVDQLPVLEGKRMTIQLSPKKKESATKKPATPKPATPAAVKAEKPAGDNEE.

The tract at residues 168-203 is disordered; that stretch reads QLSPKKKESATKKPATPKPATPAAVKAEKPAGDNEE. The span at 193-203 shows a compositional bias: basic and acidic residues; sequence KAEKPAGDNEE.

Belongs to the IF-3 family. As to quaternary structure, monomer.

It is found in the cytoplasm. In terms of biological role, IF-3 binds to the 30S ribosomal subunit and shifts the equilibrium between 70S ribosomes and their 50S and 30S subunits in favor of the free subunits, thus enhancing the availability of 30S subunits on which protein synthesis initiation begins. The polypeptide is Translation initiation factor IF-3 (Bacteroides fragilis (strain ATCC 25285 / DSM 2151 / CCUG 4856 / JCM 11019 / LMG 10263 / NCTC 9343 / Onslow / VPI 2553 / EN-2)).